Reading from the N-terminus, the 247-residue chain is ATP synthase subunit a, chloroplastic (247 aa).

5 consecutive transmembrane segments (helical) span residues 38 to 58, 95 to 115, 134 to 154, 199 to 219, and 220 to 240; these read QVLI…AIAV, VPFI…GALL, INTT…AGLT, LVVV…VMFL, and GLFT…AYIG.

The protein belongs to the ATPase A chain family. As to quaternary structure, F-type ATPases have 2 components, CF(1) - the catalytic core - and CF(0) - the membrane proton channel. CF(1) has five subunits: alpha(3), beta(3), gamma(1), delta(1), epsilon(1). CF(0) has four main subunits: a, b, b' and c.

It localises to the plastid. It is found in the chloroplast thylakoid membrane. In terms of biological role, key component of the proton channel; it plays a direct role in the translocation of protons across the membrane. The polypeptide is ATP synthase subunit a, chloroplastic (Calycanthus floridus var. glaucus (Eastern sweetshrub)).